Consider the following 198-residue polypeptide: Carnitine operon protein CaiE (198 aa).

Residues 179–198 (VEENRPRLKGTTDVKPKSAQ) are disordered. The segment covering 180 to 198 (EENRPRLKGTTDVKPKSAQ) has biased composition (basic and acidic residues).

The protein belongs to the transferase hexapeptide repeat family.

The protein operates within amine and polyamine metabolism; carnitine metabolism. Overproduction of CaiE stimulates the activity of CaiB and CaiD. The chain is Carnitine operon protein CaiE from Salmonella typhi.